Here is a 492-residue protein sequence, read N- to C-terminus: N-succinylglutamate 5-semialdehyde dehydrogenase (492 aa).

Residue 220–225 coordinates NAD(+); sequence GSANTG. Residues Glu-243 and Cys-277 contribute to the active site.

It belongs to the aldehyde dehydrogenase family. AstD subfamily.

It catalyses the reaction N-succinyl-L-glutamate 5-semialdehyde + NAD(+) + H2O = N-succinyl-L-glutamate + NADH + 2 H(+). It participates in amino-acid degradation; L-arginine degradation via AST pathway; L-glutamate and succinate from L-arginine: step 4/5. Catalyzes the NAD-dependent reduction of succinylglutamate semialdehyde into succinylglutamate. In Escherichia coli O6:K15:H31 (strain 536 / UPEC), this protein is N-succinylglutamate 5-semialdehyde dehydrogenase.